Reading from the N-terminus, the 645-residue chain is 1,4-alpha-glucan branching enzyme GlgB (645 aa).

The Nucleophile role is filled by Asp309. Glu352 serves as the catalytic Proton donor. The tract at residues 619–645 (VKTRKGSKKQDGSKTKVRSNVTSRGKR) is disordered. A compositionally biased stretch (polar residues) spans 636-645 (RSNVTSRGKR).

It belongs to the glycosyl hydrolase 13 family. GlgB subfamily. As to quaternary structure, monomer.

The enzyme catalyses Transfers a segment of a (1-&gt;4)-alpha-D-glucan chain to a primary hydroxy group in a similar glucan chain.. The protein operates within glycan biosynthesis; glycogen biosynthesis. In terms of biological role, catalyzes the formation of the alpha-1,6-glucosidic linkages in glycogen by scission of a 1,4-alpha-linked oligosaccharide from growing alpha-1,4-glucan chains and the subsequent attachment of the oligosaccharide to the alpha-1,6 position. This chain is 1,4-alpha-glucan branching enzyme GlgB, found in Bacillus cereus (strain ATCC 14579 / DSM 31 / CCUG 7414 / JCM 2152 / NBRC 15305 / NCIMB 9373 / NCTC 2599 / NRRL B-3711).